The following is a 302-amino-acid chain: GTPase Era (302 aa).

Positions Y9–E177 constitute an Era-type G domain. The G1 stretch occupies residues G17–S24. G17–S24 provides a ligand contact to GTP. The interval Q43–H47 is G2. A G3 region spans residues D64–G67. Residues D64–L68 and N126–D129 contribute to the GTP site. The G4 stretch occupies residues N126 to D129. The segment at I156–A158 is G5. The 78-residue stretch at T208–S285 folds into the KH type-2 domain.

This sequence belongs to the TRAFAC class TrmE-Era-EngA-EngB-Septin-like GTPase superfamily. Era GTPase family. Monomer.

The protein localises to the cytoplasm. It localises to the cell inner membrane. In terms of biological role, an essential GTPase that binds both GDP and GTP, with rapid nucleotide exchange. Plays a role in 16S rRNA processing and 30S ribosomal subunit biogenesis and possibly also in cell cycle regulation and energy metabolism. This chain is GTPase Era, found in Haemophilus influenzae (strain PittGG).